The chain runs to 138 residues: Basic phospholipase A2 canebraxin B (138 aa).

The signal sequence occupies residues Met-1–Gly-16. Cystine bridges form between Cys-42-Cys-131, Cys-44-Cys-60, Cys-59-Cys-111, Cys-65-Cys-138, Cys-66-Cys-104, Cys-73-Cys-97, and Cys-91-Cys-102. Residues Tyr-43, Gly-45, and Gly-47 each coordinate Ca(2+). The active site involves His-63. Asp-64 contributes to the Ca(2+) binding site. Asp-105 is an active-site residue.

The protein belongs to the phospholipase A2 family. Group II subfamily. As to quaternary structure, heterodimer of an acidic subunit and a basic chain. The acidic subunit is non-toxic, without enzymatic activity and comprises 3 peptides that are cross-linked by 7 disulfide bridges. The basic subunit is toxic, has phospholipase A2 activity and is composed of a single chain. The cofactor is Ca(2+). In terms of tissue distribution, expressed by the venom gland.

It localises to the secreted. The enzyme catalyses a 1,2-diacyl-sn-glycero-3-phosphocholine + H2O = a 1-acyl-sn-glycero-3-phosphocholine + a fatty acid + H(+). Its function is as follows. Snake venom phospholipase A2 (PLA2) that shows presynaptic neurotoxicity. PLA2 catalyzes the calcium-dependent hydrolysis of the 2-acyl groups in 3-sn-phosphoglycerides. This chain is Basic phospholipase A2 canebraxin B, found in Crotalus horridus (Timber rattlesnake).